Consider the following 204-residue polypeptide: Holliday junction branch migration complex subunit RuvA (204 aa).

Positions 1–64 (MIGKLKGTLE…EEAIRLFGFA (64 aa)) are domain I. The domain II stretch occupies residues 65-143 (TRAEQEWFCM…PFEQAVKTVS (79 aa)). Residues 144-154 (VPQREITHQPA) are flexible linker. The domain III stretch occupies residues 154-204 (AHDALSALMKLGFEREQAARALALAMNALEGEAVSSALLIRHSLKLLSSPT).

The protein belongs to the RuvA family. As to quaternary structure, homotetramer. Forms an RuvA(8)-RuvB(12)-Holliday junction (HJ) complex. HJ DNA is sandwiched between 2 RuvA tetramers; dsDNA enters through RuvA and exits via RuvB. An RuvB hexamer assembles on each DNA strand where it exits the tetramer. Each RuvB hexamer is contacted by two RuvA subunits (via domain III) on 2 adjacent RuvB subunits; this complex drives branch migration. In the full resolvosome a probable DNA-RuvA(4)-RuvB(12)-RuvC(2) complex forms which resolves the HJ.

Its subcellular location is the cytoplasm. In terms of biological role, the RuvA-RuvB-RuvC complex processes Holliday junction (HJ) DNA during genetic recombination and DNA repair, while the RuvA-RuvB complex plays an important role in the rescue of blocked DNA replication forks via replication fork reversal (RFR). RuvA specifically binds to HJ cruciform DNA, conferring on it an open structure. The RuvB hexamer acts as an ATP-dependent pump, pulling dsDNA into and through the RuvAB complex. HJ branch migration allows RuvC to scan DNA until it finds its consensus sequence, where it cleaves and resolves the cruciform DNA. The protein is Holliday junction branch migration complex subunit RuvA of Bartonella tribocorum (strain CIP 105476 / IBS 506).